The primary structure comprises 418 residues: Ankyrin repeat and SOCS box protein 6 (418 aa).

6 ANK repeats span residues 65 to 95 (EGVSNALLKMAELGLTRAAAVLLQSGANLNF), 100 to 129 (TYYTALHIAVLRNQPDMVELLVRHGADINR), 134 to 164 (HESSPLDLASEEPERLPCLQRLLDLGADVNA), 168 to 203 (NGKTALLHALASSDGVQIHNTENIRLLLEGGADVKA), 224 to 253 (CGDKEEAPMINRFCFQVTQLLLAHGADPSE), and 258 to 287 (ESLTHICLKSFKLHFPLLCFLLESGAAYNC). Residues 358 to 413 (ALHASLRQLESYPPPLKHLCRVSIRLCLRPWPVDTKVKALPLPDRLKWYLLSAHSD) form the SOCS box domain.

Belongs to the ankyrin SOCS box (ASB) family. Binds APS. Identified in a complex with ELOB and ELOC. Interacts with CUL5 and RNF7. Interacts with SQSTM1. Detected in adipocytes.

Its subcellular location is the cytoplasm. It functions in the pathway protein modification; protein ubiquitination. Probable substrate-recognition component of a SCF-like ECS (Elongin-Cullin-SOCS-box protein) E3 ubiquitin-protein ligase complex which mediates the ubiquitination and subsequent proteasomal degradation of target proteins. May play a role in the regulation of cell proliferation and autophagy by promoting the ubiquitination and degradation of SQSTM1. The chain is Ankyrin repeat and SOCS box protein 6 (Asb6) from Mus musculus (Mouse).